The following is a 375-amino-acid chain: 3-dehydroquinate synthase (375 aa).

NAD(+) contacts are provided by residues 82 to 87 (SGETSK), 116 to 120 (GVVGD), 140 to 141 (TT), Lys-153, and Lys-162. Zn(2+) is bound by residues Glu-195, His-259, and His-276.

The protein belongs to the sugar phosphate cyclases superfamily. Dehydroquinate synthase family. It depends on NAD(+) as a cofactor. The cofactor is Co(2+). Zn(2+) is required as a cofactor.

It is found in the cytoplasm. The enzyme catalyses 7-phospho-2-dehydro-3-deoxy-D-arabino-heptonate = 3-dehydroquinate + phosphate. It functions in the pathway metabolic intermediate biosynthesis; chorismate biosynthesis; chorismate from D-erythrose 4-phosphate and phosphoenolpyruvate: step 2/7. Catalyzes the conversion of 3-deoxy-D-arabino-heptulosonate 7-phosphate (DAHP) to dehydroquinate (DHQ). The protein is 3-dehydroquinate synthase of Rhodopirellula baltica (strain DSM 10527 / NCIMB 13988 / SH1).